The primary structure comprises 143 residues: Protein STIG1 (143 aa).

The signal sequence occupies residues Met1–Gly23. The segment at Arg76 to Leu87 is sufficient for PI(4)P binding. The segment at Phe80–Phe83 is sufficient for binding to the extracellular domain of PRK2. The segment at Phe88 to Ile115 is sufficient for PI(3)P binding.

This sequence belongs to the STIG1 family. Interacts with PRK1 and PRK2 (via extracellular domain). As to expression, expressed in the stigma and the upper section of the style.

It is found in the secreted. Its subcellular location is the extracellular space. It localises to the apoplast. Functionally, promotes pollen tube growth. A C-terminal peptide is cleaved from the propeptide in the stigmatic exudate and represent the major form of STIG1. Binds phosphoinositol lipids. The binding of external phosphatidylinositol 3-phosphate (PI(3)P) and PRK2 by STIG1 induces a rapid intracellular reactive oxygen species elevation. The sequence is that of Protein STIG1 from Solanum lycopersicum (Tomato).